The sequence spans 215 residues: Uracil phosphoribosyltransferase (215 aa).

5-phospho-alpha-D-ribose 1-diphosphate is bound by residues Arg84, Arg109, and 136-144; that span reads DPMLATGNT. Uracil contacts are provided by residues Ile198 and 203-205; that span reads GDA. 5-phospho-alpha-D-ribose 1-diphosphate is bound at residue Asp204.

This sequence belongs to the UPRTase family. Mg(2+) serves as cofactor.

It carries out the reaction UMP + diphosphate = 5-phospho-alpha-D-ribose 1-diphosphate + uracil. It functions in the pathway pyrimidine metabolism; UMP biosynthesis via salvage pathway; UMP from uracil: step 1/1. With respect to regulation, allosterically activated by GTP. In terms of biological role, catalyzes the conversion of uracil and 5-phospho-alpha-D-ribose 1-diphosphate (PRPP) to UMP and diphosphate. This chain is Uracil phosphoribosyltransferase, found in Methanothermobacter thermautotrophicus (strain ATCC 29096 / DSM 1053 / JCM 10044 / NBRC 100330 / Delta H) (Methanobacterium thermoautotrophicum).